Here is a 180-residue protein sequence, read N- to C-terminus: Large ribosomal subunit protein uL10 (180 aa).

The protein belongs to the universal ribosomal protein uL10 family. In terms of assembly, part of the ribosomal stalk of the 50S ribosomal subunit. The N-terminus interacts with L11 and the large rRNA to form the base of the stalk. The C-terminus forms an elongated spine to which L12 dimers bind in a sequential fashion forming a multimeric L10(L12)X complex.

Forms part of the ribosomal stalk, playing a central role in the interaction of the ribosome with GTP-bound translation factors. The protein is Large ribosomal subunit protein uL10 (rplJ) of Treponema pallidum (strain Nichols).